The chain runs to 785 residues: Cadherin-7 (785 aa).

An N-terminal signal peptide occupies residues 1–27 (MKLGKVEFCHLLQIIALFLCLSGMNQA). Residues 28 to 47 (EPSRSRSKPYFQSGRTRTKR) constitute a propeptide that is removed on maturation. Residues 48–607 (SWVWNQFFVL…AYILPAGLST (560 aa)) are Extracellular-facing. Cadherin domains follow at residues 49–153 (WVWN…EPKF), 154–262 (LDGP…PPRF), 263–377 (PRRS…PPVF), 378–482 (TSRL…APEF), and 482–599 (FAME…AEAY). Residues asparagine 449 and asparagine 530 are each glycosylated (N-linked (GlcNAc...) asparagine). A helical membrane pass occupies residues 608–628 (GALIAILACVLTLLVLVLLIV). Topologically, residues 629 to 785 (TMRRRKKEPL…YGSGPDCLYS (157 aa)) are cytoplasmic.

The protein resides in the cell membrane. In terms of biological role, cadherins are calcium-dependent cell adhesion proteins. They preferentially interact with themselves in a homophilic manner in connecting cells; cadherins may thus contribute to the sorting of heterogeneous cell types. This Gallus gallus (Chicken) protein is Cadherin-7 (CDH7).